Consider the following 311-residue polypeptide: Mediator of RNA polymerase II transcription subunit 27 (311 aa).

The protein belongs to the Mediator complex subunit 27 family. As to quaternary structure, component of the Mediator complex.

Its subcellular location is the nucleus. Its function is as follows. Component of the Mediator complex, a coactivator involved in the regulated transcription of nearly all RNA polymerase II-dependent genes. Mediator functions as a bridge to convey information from gene-specific regulatory proteins to the basal RNA polymerase II transcription machinery. Mediator is recruited to promoters by direct interactions with regulatory proteins and serves as a scaffold for the assembly of a functional preinitiation complex with RNA polymerase II and the general transcription factors. The sequence is that of Mediator of RNA polymerase II transcription subunit 27 (med27) from Xenopus tropicalis (Western clawed frog).